Consider the following 55-residue polypeptide: Rubredoxin-1 (55 aa).

A Rubredoxin-like domain is found at 1–54; it reads MKKWQCVVCGLIYDEAKGWPEEGIEAGTRWEDVPEDWLCPDCGVGKLDFEMIEI. 4 residues coordinate Fe cation: C6, C9, C39, and C42.

Belongs to the rubredoxin family. It depends on Fe(3+) as a cofactor.

The protein resides in the cytoplasm. Its pathway is hydrocarbon metabolism; alkane degradation. Its function is as follows. Involved in the hydrocarbon hydroxylating system, which transfers electrons from NADH to rubredoxin reductase and then through rubredoxin to alkane 1 monooxygenase. This chain is Rubredoxin-1 (rubA1), found in Pseudomonas aeruginosa (strain ATCC 15692 / DSM 22644 / CIP 104116 / JCM 14847 / LMG 12228 / 1C / PRS 101 / PAO1).